Reading from the N-terminus, the 277-residue chain is Antigen 1 (277 aa).

Positions 1-16 (MQLLALTLALCASIAA) are cleaved as a signal peptide. N-linked (GlcNAc...) asparagine glycosylation is found at Asn-41, Asn-71, Asn-127, and Asn-200. Residues 230–277 (CVGGEEENDGQGEEQTEEPAQDDQQDEAAEEEIPENCHTHEGGELHCT) form a disordered region. Positions 233-263 (GEEENDGQGEEQTEEPAQDDQQDEAAEEEIP) are enriched in acidic residues. Residues 264–277 (ENCHTHEGGELHCT) are compositionally biased toward basic and acidic residues.

The protein belongs to the ZPS1 family.

This chain is Antigen 1 (aspnd1), found in Emericella nidulans (strain FGSC A4 / ATCC 38163 / CBS 112.46 / NRRL 194 / M139) (Aspergillus nidulans).